Reading from the N-terminus, the 261-residue chain is Putative hydro-lyase Sfum_3393 (261 aa).

This sequence belongs to the D-glutamate cyclase family.

The chain is Putative hydro-lyase Sfum_3393 from Syntrophobacter fumaroxidans (strain DSM 10017 / MPOB).